The chain runs to 428 residues: 3-phosphoshikimate 1-carboxyvinyltransferase (428 aa).

3-phosphoshikimate is bound by residues K23, S24, and R28. K23 is a binding site for phosphoenolpyruvate. Phosphoenolpyruvate-binding residues include G97 and R125. The 3-phosphoshikimate site is built by S170, S171, Q172, S198, D314, N337, and K341. A phosphoenolpyruvate-binding site is contributed by Q172. The active-site Proton acceptor is the D314. Phosphoenolpyruvate-binding residues include R345, R387, and K412.

Belongs to the EPSP synthase family. Monomer.

Its subcellular location is the cytoplasm. It catalyses the reaction 3-phosphoshikimate + phosphoenolpyruvate = 5-O-(1-carboxyvinyl)-3-phosphoshikimate + phosphate. It functions in the pathway metabolic intermediate biosynthesis; chorismate biosynthesis; chorismate from D-erythrose 4-phosphate and phosphoenolpyruvate: step 6/7. Catalyzes the transfer of the enolpyruvyl moiety of phosphoenolpyruvate (PEP) to the 5-hydroxyl of shikimate-3-phosphate (S3P) to produce enolpyruvyl shikimate-3-phosphate and inorganic phosphate. This Yersinia pseudotuberculosis serotype IB (strain PB1/+) protein is 3-phosphoshikimate 1-carboxyvinyltransferase.